Reading from the N-terminus, the 156-residue chain is ATP synthase subunit b (156 aa).

The helical transmembrane segment at 7-27 (LFAQIIVFFGLVWFTMKFVWP) threads the bilayer.

This sequence belongs to the ATPase B chain family. In terms of assembly, F-type ATPases have 2 components, F(1) - the catalytic core - and F(0) - the membrane proton channel. F(1) has five subunits: alpha(3), beta(3), gamma(1), delta(1), epsilon(1). F(0) has three main subunits: a(1), b(2) and c(10-14). The alpha and beta chains form an alternating ring which encloses part of the gamma chain. F(1) is attached to F(0) by a central stalk formed by the gamma and epsilon chains, while a peripheral stalk is formed by the delta and b chains.

Its subcellular location is the cell inner membrane. Its function is as follows. F(1)F(0) ATP synthase produces ATP from ADP in the presence of a proton or sodium gradient. F-type ATPases consist of two structural domains, F(1) containing the extramembraneous catalytic core and F(0) containing the membrane proton channel, linked together by a central stalk and a peripheral stalk. During catalysis, ATP synthesis in the catalytic domain of F(1) is coupled via a rotary mechanism of the central stalk subunits to proton translocation. Component of the F(0) channel, it forms part of the peripheral stalk, linking F(1) to F(0). This Neisseria gonorrhoeae (strain NCCP11945) protein is ATP synthase subunit b.